Here is a 291-residue protein sequence, read N- to C-terminus: MKEIAIIGSTASGKTALSLEIASKTNSIILSLDSLCVYKEIDIVSAKPTLEERGEILHFGIDEVYPNVEFDVVCFMELYKKAKEYALKNDKNLIIVGGTGFYLKALIDGLSLGIESKIKLDISVSEAYDLLYSLDEMYMKKIEKNDKYRVEKAYAIYKQTGLTPTLYFEKNPKIPLAKDLKIFEILWEKEDLKKRVASRTNTMIKSGLIDEIIYLEKKYTRAPNCMSSIGIVETFEYLDGKLSKEELEEKISQNTMKLAKRQNTFNKGQFLNKTSNIIDNLNSDILKYFSI.

Residue 8 to 15 (GSTASGKT) coordinates ATP. 10-15 (TASGKT) serves as a coordination point for substrate. Positions 33 to 36 (DSLC) are interaction with substrate tRNA.

The protein belongs to the IPP transferase family. In terms of assembly, monomer. It depends on Mg(2+) as a cofactor.

The enzyme catalyses adenosine(37) in tRNA + dimethylallyl diphosphate = N(6)-dimethylallyladenosine(37) in tRNA + diphosphate. Its function is as follows. Catalyzes the transfer of a dimethylallyl group onto the adenine at position 37 in tRNAs that read codons beginning with uridine, leading to the formation of N6-(dimethylallyl)adenosine (i(6)A). This Aliarcobacter butzleri (strain RM4018) (Arcobacter butzleri) protein is tRNA dimethylallyltransferase.